The following is a 136-amino-acid chain: Small ribosomal subunit protein bS6 (136 aa).

The tract at residues 99 to 136 (QSEMLKAEENRSERRERRERPEHGGHEGLDGDSDKADE) is disordered. Positions 103 to 136 (LKAEENRSERRERRERPEHGGHEGLDGDSDKADE) are enriched in basic and acidic residues.

This sequence belongs to the bacterial ribosomal protein bS6 family.

Its function is as follows. Binds together with bS18 to 16S ribosomal RNA. In Azotobacter vinelandii (strain DJ / ATCC BAA-1303), this protein is Small ribosomal subunit protein bS6.